The following is a 283-amino-acid chain: 4-diphosphocytidyl-2-C-methyl-D-erythritol kinase (283 aa).

Residue Lys10 is part of the active site. 99–109 (PMGGGLGGGSS) lines the ATP pocket. Asp141 is an active-site residue.

This sequence belongs to the GHMP kinase family. IspE subfamily. As to quaternary structure, homodimer.

The catalysed reaction is 4-CDP-2-C-methyl-D-erythritol + ATP = 4-CDP-2-C-methyl-D-erythritol 2-phosphate + ADP + H(+). It participates in isoprenoid biosynthesis; isopentenyl diphosphate biosynthesis via DXP pathway; isopentenyl diphosphate from 1-deoxy-D-xylulose 5-phosphate: step 3/6. Catalyzes the phosphorylation of the position 2 hydroxy group of 4-diphosphocytidyl-2C-methyl-D-erythritol. This Escherichia coli O81 (strain ED1a) protein is 4-diphosphocytidyl-2-C-methyl-D-erythritol kinase.